Consider the following 73-residue polypeptide: UPF0154 protein LGAS_0795 (73 aa).

The helical transmembrane segment at 3–23 threads the bilayer; it reads LGLAIFLIIIALLIGLVGGFY.

It belongs to the UPF0154 family.

The protein localises to the cell membrane. The chain is UPF0154 protein LGAS_0795 from Lactobacillus gasseri (strain ATCC 33323 / DSM 20243 / BCRC 14619 / CIP 102991 / JCM 1131 / KCTC 3163 / NCIMB 11718 / NCTC 13722 / AM63).